The following is a 377-amino-acid chain: Cell division cycle-associated protein 7 (377 aa).

Disordered stretches follow at residues 58–113 (RTRS…EEDG) and 144–211 (IFSG…EEDK). The span at 76–100 (PARNTRRAANTKAAPPKPSESSAND) shows a compositional bias: low complexity. The segment at 148–173 (RHSLPGHRTKDSKSPRRRTFPGVASR) is interaction with MYC. A Nuclear localization signal motif is present at residues 163-179 (RRRTFPGVASRRNPERR). Position 166 is a phosphothreonine (T166). S193 carries the post-translational modification Phosphoserine. At T199 the chain carries Phosphothreonine. Acidic residues predominate over residues 199–210 (TEEEEDEEEEED). Residue K211 forms a Glycyl lysine isopeptide (Lys-Gly) (interchain with G-Cter in SUMO2) linkage. S220 carries the post-translational modification Phosphoserine. Residues 253–377 (EEEIRNICSN…SLKQEFEMQA (125 aa)) are mediates transcriptional activity.

Interacts with MYC (via C-terminus), YWHAE and YWHAZ. Phosphorylation at Thr-166 promotes interaction with YWHAE and YWHAZ, dissociation from MYC and sequestration in the cytoplasm.

It is found in the nucleus. Its subcellular location is the cytoplasm. Its function is as follows. Participates in MYC-mediated cell transformation and apoptosis; induces anchorage-independent growth and clonogenicity in lymphoblastoid cells. Insufficient to induce tumorigenicity when overexpressed but contributes to MYC-mediated tumorigenesis. May play a role as transcriptional regulator. This is Cell division cycle-associated protein 7 (Cdca7) from Rattus norvegicus (Rat).